Consider the following 293-residue polypeptide: Formamidopyrimidine-DNA glycosylase (293 aa).

Pro2 serves as the catalytic Schiff-base intermediate with DNA. Glu3 acts as the Proton donor in catalysis. Lys58 acts as the Proton donor; for beta-elimination activity in catalysis. His104, Arg123, and Lys166 together coordinate DNA. Residues 257–293 (AVYDRESEPCRTKGCGGVVKRFVQNGRSTFCCPKCQK) form an FPG-type zinc finger. Arg283 functions as the Proton donor; for delta-elimination activity in the catalytic mechanism.

Belongs to the FPG family. Monomer. Requires Zn(2+) as cofactor.

The catalysed reaction is Hydrolysis of DNA containing ring-opened 7-methylguanine residues, releasing 2,6-diamino-4-hydroxy-5-(N-methyl)formamidopyrimidine.. The enzyme catalyses 2'-deoxyribonucleotide-(2'-deoxyribose 5'-phosphate)-2'-deoxyribonucleotide-DNA = a 3'-end 2'-deoxyribonucleotide-(2,3-dehydro-2,3-deoxyribose 5'-phosphate)-DNA + a 5'-end 5'-phospho-2'-deoxyribonucleoside-DNA + H(+). Involved in base excision repair of DNA damaged by oxidation or by mutagenic agents. Acts as a DNA glycosylase that recognizes and removes damaged bases. Has a preference for oxidized purines, such as 7,8-dihydro-8-oxoguanine (8-oxoG). Has AP (apurinic/apyrimidinic) lyase activity and introduces nicks in the DNA strand. Cleaves the DNA backbone by beta-delta elimination to generate a single-strand break at the site of the removed base with both 3'- and 5'-phosphates. This chain is Formamidopyrimidine-DNA glycosylase, found in Rhodopseudomonas palustris (strain BisA53).